The primary structure comprises 309 residues: Probable inactive poly [ADP-ribose] polymerase SRO5 (309 aa).

The 228-residue stretch at 28–255 folds into the PARP catalytic domain; it reads CDSSSDRSFA…AFPVLIKALS (228 aa). Residues 238–309 enclose the RST domain; the sequence is KRLRSPWMAF…IKACGHKVQH (72 aa).

As to quaternary structure, interacts with dehydration-responsive DREB2 proteins and a number of transcription factors belonging to several protein families.

It localises to the nucleus matrix. Probable inactive ADP-ribosyltransferase that may be involved in stress and developmental responses. The sequence is that of Probable inactive poly [ADP-ribose] polymerase SRO5 (SRO5) from Arabidopsis thaliana (Mouse-ear cress).